We begin with the raw amino-acid sequence, 523 residues long: GMP synthase [glutamine-hydrolyzing] (523 aa).

The 198-residue stretch at 8–205 folds into the Glutamine amidotransferase type-1 domain; it reads KILILDFGSQ…VVDICGCETN (198 aa). The active-site Nucleophile is C85. Active-site residues include H179 and E181. The 193-residue stretch at 206–398 folds into the GMPS ATP-PPase domain; it reads WTAENIIEDA…LGLPAEMLNR (193 aa). ATP is bound at residue 233 to 239; the sequence is SGGVDSS.

As to quaternary structure, homodimer.

It carries out the reaction XMP + L-glutamine + ATP + H2O = GMP + L-glutamate + AMP + diphosphate + 2 H(+). The protein operates within purine metabolism; GMP biosynthesis; GMP from XMP (L-Gln route): step 1/1. In terms of biological role, catalyzes the synthesis of GMP from XMP. The protein is GMP synthase [glutamine-hydrolyzing] of Histophilus somni (strain 129Pt) (Haemophilus somnus).